The chain runs to 248 residues: 1-(5-phosphoribosyl)-5-[(5-phosphoribosylamino)methylideneamino] imidazole-4-carboxamide isomerase (248 aa).

Asp-8 (proton acceptor) is an active-site residue. Asp-129 (proton donor) is an active-site residue.

The protein belongs to the HisA/HisF family.

It localises to the cytoplasm. It catalyses the reaction 1-(5-phospho-beta-D-ribosyl)-5-[(5-phospho-beta-D-ribosylamino)methylideneamino]imidazole-4-carboxamide = 5-[(5-phospho-1-deoxy-D-ribulos-1-ylimino)methylamino]-1-(5-phospho-beta-D-ribosyl)imidazole-4-carboxamide. It participates in amino-acid biosynthesis; L-histidine biosynthesis; L-histidine from 5-phospho-alpha-D-ribose 1-diphosphate: step 4/9. The protein is 1-(5-phosphoribosyl)-5-[(5-phosphoribosylamino)methylideneamino] imidazole-4-carboxamide isomerase of Rhizobium etli (strain ATCC 51251 / DSM 11541 / JCM 21823 / NBRC 15573 / CFN 42).